A 246-amino-acid chain; its full sequence is Flavin-dependent thymidylate synthase (246 aa).

A ThyX domain is found at 17–241 (ITVELVKSAA…PLTHAAFNAN (225 aa)). FAD-binding positions include serine 69, 92 to 94 (RHR), and glutamate 101. Residues 89–92 (EFMR), 101–105 (EESGR), and arginine 173 each bind dUMP. Residues 92–103 (RHRVGWSYNEES) carry the ThyX motif motif. Residues 189-191 (NAR) and histidine 195 each bind FAD. Residue arginine 200 participates in dUMP binding. Residue arginine 200 is the Involved in ionization of N3 of dUMP, leading to its activation of the active site.

This sequence belongs to the thymidylate synthase ThyX family. As to quaternary structure, homotetramer. The cofactor is FAD.

The catalysed reaction is dUMP + (6R)-5,10-methylene-5,6,7,8-tetrahydrofolate + NADPH + H(+) = dTMP + (6S)-5,6,7,8-tetrahydrofolate + NADP(+). It participates in pyrimidine metabolism; dTTP biosynthesis. Functionally, catalyzes the reductive methylation of 2'-deoxyuridine-5'-monophosphate (dUMP) to 2'-deoxythymidine-5'-monophosphate (dTMP) while utilizing 5,10-methylenetetrahydrofolate (mTHF) as the methyl donor, and NADPH and FADH(2) as the reductant. This is Flavin-dependent thymidylate synthase from Streptomyces coelicolor (strain ATCC BAA-471 / A3(2) / M145).